Reading from the N-terminus, the 153-residue chain is 6,7-dimethyl-8-ribityllumazine synthase (153 aa).

Residues Phe-21, 55–57, and 79–81 each bind 5-amino-6-(D-ribitylamino)uracil; these read AFE and TVI. A (2S)-2-hydroxy-3-oxobutyl phosphate-binding site is contributed by 84–85; the sequence is AT. Catalysis depends on His-87, which acts as the Proton donor. Phe-112 is a binding site for 5-amino-6-(D-ribitylamino)uracil. Arg-126 contributes to the (2S)-2-hydroxy-3-oxobutyl phosphate binding site.

It belongs to the DMRL synthase family. In terms of assembly, forms an icosahedral capsid composed of 60 subunits, arranged as a dodecamer of pentamers.

It carries out the reaction (2S)-2-hydroxy-3-oxobutyl phosphate + 5-amino-6-(D-ribitylamino)uracil = 6,7-dimethyl-8-(1-D-ribityl)lumazine + phosphate + 2 H2O + H(+). Its pathway is cofactor biosynthesis; riboflavin biosynthesis; riboflavin from 2-hydroxy-3-oxobutyl phosphate and 5-amino-6-(D-ribitylamino)uracil: step 1/2. Functionally, catalyzes the formation of 6,7-dimethyl-8-ribityllumazine by condensation of 5-amino-6-(D-ribitylamino)uracil with 3,4-dihydroxy-2-butanone 4-phosphate. This is the penultimate step in the biosynthesis of riboflavin. The sequence is that of 6,7-dimethyl-8-ribityllumazine synthase from Bacillus cereus (strain AH187).